We begin with the raw amino-acid sequence, 835 residues long: Phosphatidylinositol 4-kinase beta (835 aa).

3 disordered regions span residues 1 to 61, 99 to 139, and 267 to 341; these read MGDT…PLDV, SSAS…VRRR, and PSSQ…PVRL. Residues 19-59 are compositionally biased toward low complexity; the sequence is SPSTSTTSSLSLPSSPSSGPHPLTSSSPSTSEGLPTSSPPL. Positions 59–262 constitute a PIK helical domain; the sequence is LDVISEGLGE…GTKLRKLILS (204 aa). Composition is skewed to basic and acidic residues over residues 125–134 and 267–276; these read ISEEEVEPIK and PSSQRIRREV. Residues 277 to 288 are compositionally biased toward pro residues; it reads PQPPPPYPPPLH. Residues 311–332 show a composition bias toward polar residues; that stretch reads DATVSISLSSNLKRTASNPKVE. Residues 554–820 form the PI3K/PI4K catalytic domain; the sequence is EPWQEKVRRI…MVDGSMRSIT (267 aa). The interval 560–566 is G-loop; that stretch reads VRRIREG. Positions 687-695 are catalytic loop; the sequence is QVKDRHNGN. Positions 706–730 are activation loop; sequence HIDFGFILSSSPRNLGFETSAFKLT.

Belongs to the PI3/PI4-kinase family. Type III PI4K subfamily. It depends on Mg(2+) as a cofactor. Requires Mn(2+) as cofactor. Expressed in the inner ear otic vesicles.

Its subcellular location is the endomembrane system. The protein localises to the mitochondrion outer membrane. It is found in the rough endoplasmic reticulum membrane. The enzyme catalyses a 1,2-diacyl-sn-glycero-3-phospho-(1D-myo-inositol) + ATP = a 1,2-diacyl-sn-glycero-3-phospho-(1D-myo-inositol 4-phosphate) + ADP + H(+). In terms of biological role, phosphorylates phosphatidylinositol (PI) in the first committed step in the production of the second messenger inositol-1,4,5,-trisphosphate (PIP). May play an important role the in inner ear development. This chain is Phosphatidylinositol 4-kinase beta (pi4kb), found in Danio rerio (Zebrafish).